A 394-amino-acid polypeptide reads, in one-letter code: S-adenosylmethionine synthase 3 (394 aa).

E11 is a binding site for Mg(2+). H17 provides a ligand contact to ATP. Residue E45 participates in K(+) binding. L-methionine-binding residues include E58 and Q101. ATP is bound by residues 169 to 171 (DGK), 237 to 240 (SGRF), D248, 254 to 255 (RK), A271, K275, and K279. D248 serves as a coordination point for L-methionine. K279 provides a ligand contact to L-methionine.

This sequence belongs to the AdoMet synthase family. In terms of assembly, homotetramer. It depends on Mn(2+) as a cofactor. Requires Mg(2+) as cofactor. The cofactor is Co(2+). K(+) is required as a cofactor.

It is found in the cytoplasm. The enzyme catalyses L-methionine + ATP + H2O = S-adenosyl-L-methionine + phosphate + diphosphate. It functions in the pathway amino-acid biosynthesis; S-adenosyl-L-methionine biosynthesis; S-adenosyl-L-methionine from L-methionine: step 1/1. Functionally, catalyzes the formation of S-adenosylmethionine from methionine and ATP. The reaction comprises two steps that are both catalyzed by the same enzyme: formation of S-adenosylmethionine (AdoMet) and triphosphate, and subsequent hydrolysis of the triphosphate. The polypeptide is S-adenosylmethionine synthase 3 (SAM3) (Hordeum vulgare (Barley)).